The chain runs to 185 residues: Peptidyl-tRNA hydrolase (185 aa).

Tyr14 lines the tRNA pocket. His19 acts as the Proton acceptor in catalysis. TRNA-binding residues include Tyr65, Asn67, and Asn113.

The protein belongs to the PTH family. As to quaternary structure, monomer.

The protein resides in the cytoplasm. It catalyses the reaction an N-acyl-L-alpha-aminoacyl-tRNA + H2O = an N-acyl-L-amino acid + a tRNA + H(+). Its function is as follows. Hydrolyzes ribosome-free peptidyl-tRNAs (with 1 or more amino acids incorporated), which drop off the ribosome during protein synthesis, or as a result of ribosome stalling. Catalyzes the release of premature peptidyl moieties from peptidyl-tRNA molecules trapped in stalled 50S ribosomal subunits, and thus maintains levels of free tRNAs and 50S ribosomes. This is Peptidyl-tRNA hydrolase from Rickettsia africae (strain ESF-5).